The following is a 430-amino-acid chain: DNA polymerase IV 1 (430 aa).

The UmuC domain occupies 45–225 (LAHIDCDAFY…KPVTLIWGVG (181 aa)). Mg(2+) contacts are provided by aspartate 49 and aspartate 142. Glutamate 143 is a catalytic residue.

Belongs to the DNA polymerase type-Y family. Monomer. Requires Mg(2+) as cofactor.

It localises to the cytoplasm. It carries out the reaction DNA(n) + a 2'-deoxyribonucleoside 5'-triphosphate = DNA(n+1) + diphosphate. Poorly processive, error-prone DNA polymerase involved in untargeted mutagenesis. Copies undamaged DNA at stalled replication forks, which arise in vivo from mismatched or misaligned primer ends. These misaligned primers can be extended by PolIV. Exhibits no 3'-5' exonuclease (proofreading) activity. May be involved in translesional synthesis, in conjunction with the beta clamp from PolIII. The chain is DNA polymerase IV 1 (dinB1) from Rhizobium meliloti (strain 1021) (Ensifer meliloti).